Consider the following 169-residue polypeptide: uncharacterized protein (169 aa).

This is an uncharacterized protein from Azospirillum brasilense.